The following is a 438-amino-acid chain: MAAQAAPAEELSKLSVEETKPVSAAANGNDSNAESGDEEGEEGTTPAAGAAKKKKKRKPRKKKKAPTSQSEPPRVLVSQLFPNKQYPKGEEVEYVNDNLSRVTNEEKRHLDSLASNQEFLTDYRHAAEVHRQVRQWAQKSIKPGQTLTEIAENIEDSVRALTGHTGLEEGDALVAGMGFPTGLSINHCAAHYTPNAGNKMVLQEDDVMKVDFGVHVNGRIVDSAFTVAFNPRYDPLLEAVKAATNAGIKEAGIDVRVGDIGAAIQEVMESYEVEINGQMLPVKSIRNLNGHTISHYSIHGTKSVPIVKSNDQTKMEEGDVFAIETFGSTGNGYVHEEGEVSHYAKRGDAAKVDLRLSSAKSLLKVIDKNFGTLPFCRRYIDRLGQDKYLLGLNNLVSQGIVEAYPPLVDKKGSYTAQYEHTILLRPTVKEVISRGDDF.

Residues 1–89 (MAAQAAPAEE…LFPNKQYPKG (89 aa)) are disordered. Positions 10–20 (ELSKLSVEETK) are enriched in basic and acidic residues. Positions 51 to 65 (AKKKKKRKPRKKKKA) are enriched in basic residues. His-191 contacts substrate. A divalent metal cation is bound by residues Asp-211, Asp-222, and His-291. His-299 provides a ligand contact to substrate. A divalent metal cation contacts are provided by Glu-324 and Glu-419.

This sequence belongs to the peptidase M24A family. Methionine aminopeptidase eukaryotic type 2 subfamily. It depends on Co(2+) as a cofactor. The cofactor is Zn(2+). Mn(2+) is required as a cofactor. Fe(2+) serves as cofactor.

Its subcellular location is the cytoplasm. It catalyses the reaction Release of N-terminal amino acids, preferentially methionine, from peptides and arylamides.. Functionally, cotranslationally removes the N-terminal methionine from nascent proteins. The N-terminal methionine is often cleaved when the second residue in the primary sequence is small and uncharged (Met-Ala-, Cys, Gly, Pro, Ser, Thr, or Val). The chain is Methionine aminopeptidase 2 from Sordaria macrospora (strain ATCC MYA-333 / DSM 997 / K(L3346) / K-hell).